The primary structure comprises 121 residues: MADLDVDIVAVEREIWSGKATFVFTRTTSGEIGILPRHIPLVAQLVDDAMVRVEREGEEDLRVAVGGGFMSVTESGVIILAETAELESEINADEARRDSESDDPATAARGRARLRALGQID.

This sequence belongs to the ATPase epsilon chain family. F-type ATPases have 2 components, CF(1) - the catalytic core - and CF(0) - the membrane proton channel. CF(1) has five subunits: alpha(3), beta(3), gamma(1), delta(1), epsilon(1). CF(0) has three main subunits: a, b and c.

The protein localises to the cell membrane. In terms of biological role, produces ATP from ADP in the presence of a proton gradient across the membrane. This Mycobacterium sp. (strain JLS) protein is ATP synthase epsilon chain.